We begin with the raw amino-acid sequence, 553 residues long: Chaperonin GroEL (553 aa).

ATP contacts are provided by residues 30-33 (TLGP), Lys-51, 87-91 (DGTTT), Gly-415, and Asp-495.

The protein belongs to the chaperonin (HSP60) family. Forms a cylinder of 14 subunits composed of two heptameric rings stacked back-to-back. Interacts with the co-chaperonin GroES.

The protein localises to the cytoplasm. The enzyme catalyses ATP + H2O + a folded polypeptide = ADP + phosphate + an unfolded polypeptide.. Its function is as follows. Together with its co-chaperonin GroES, plays an essential role in assisting protein folding. The GroEL-GroES system forms a nano-cage that allows encapsulation of the non-native substrate proteins and provides a physical environment optimized to promote and accelerate protein folding. The protein is Chaperonin GroEL of Buchnera aphidicola subsp. Tuberolachnus salignus.